Reading from the N-terminus, the 226-residue chain is Glutathione peroxidase 3 (226 aa).

Residues 1 to 24 form the signal peptide; that stretch reads MARLFRASCLLSLLLAGFIPPSQG. Sec73 is a catalytic residue. Residue Sec73 is a non-standard amino acid, selenocysteine.

The protein belongs to the glutathione peroxidase family. Homotetramer. Secreted in plasma.

The protein resides in the secreted. The enzyme catalyses 2 glutathione + H2O2 = glutathione disulfide + 2 H2O. It catalyses the reaction tert-butyl hydroperoxide + 2 glutathione = tert-butanol + glutathione disulfide + H2O. In terms of biological role, protects cells and enzymes from oxidative damage, by catalyzing the reduction of hydrogen peroxide, lipid peroxides and organic hydroperoxide, by glutathione. The polypeptide is Glutathione peroxidase 3 (Bos taurus (Bovine)).